The sequence spans 413 residues: Arginine biosynthesis bifunctional protein ArgJ (413 aa).

Positions 158, 184, 195, 285, 408, and 413 each coordinate substrate. Catalysis depends on Thr-195, which acts as the Nucleophile.

It belongs to the ArgJ family. In terms of assembly, heterotetramer of two alpha and two beta chains.

It is found in the cytoplasm. It catalyses the reaction N(2)-acetyl-L-ornithine + L-glutamate = N-acetyl-L-glutamate + L-ornithine. The catalysed reaction is L-glutamate + acetyl-CoA = N-acetyl-L-glutamate + CoA + H(+). It participates in amino-acid biosynthesis; L-arginine biosynthesis; L-ornithine and N-acetyl-L-glutamate from L-glutamate and N(2)-acetyl-L-ornithine (cyclic): step 1/1. The protein operates within amino-acid biosynthesis; L-arginine biosynthesis; N(2)-acetyl-L-ornithine from L-glutamate: step 1/4. In terms of biological role, catalyzes two activities which are involved in the cyclic version of arginine biosynthesis: the synthesis of N-acetylglutamate from glutamate and acetyl-CoA as the acetyl donor, and of ornithine by transacetylation between N(2)-acetylornithine and glutamate. This is Arginine biosynthesis bifunctional protein ArgJ from Brucella melitensis biotype 1 (strain ATCC 23456 / CCUG 17765 / NCTC 10094 / 16M).